A 337-amino-acid chain; its full sequence is MSEPRKLEVLRAIVEDYVHSREPVGSKALVERHHLGVSSATIRNDMAALEDEGLITAPHTSAGRIPTDKGYRLFVDQISAVKPLSQAERRAIQTLLEGSEDLDDVLERTVRLLSQLTNQVAVVQYPHLSRAMVRHIEFVLLAPRQVLIVLIADTGKVEQRVIDVGQELGDDALAGLRARFLKSLAGTPLSLLPQALPAVVAGCEPSRRHAAQALARGLDALASSSREERMVMAGTANLARSNVDFPLSIGPVLEALEEQVVMLRLLSDMAQDPRGVTVSIGRENPYDGLAEASVVATGYGPGSSAKVGVLGPTRMDYPTTMAAVRAVARYLSRILGP.

The protein belongs to the HrcA family.

Its function is as follows. Negative regulator of class I heat shock genes (grpE-dnaK-dnaJ and groELS operons). Prevents heat-shock induction of these operons. The chain is Heat-inducible transcription repressor HrcA from Arthrobacter sp. (strain FB24).